The following is a 609-amino-acid chain: UvrABC system protein C (609 aa).

The 79-residue stretch at 16–94 (SSAGVYRMYD…IKQYMPRYNV (79 aa)) folds into the GIY-YIG domain. One can recognise a UVR domain in the interval 203–238 (QQVIATLVGKMEQAAMDLNYEDAARYRDQISALRRV).

Belongs to the UvrC family. Interacts with UvrB in an incision complex.

The protein localises to the cytoplasm. Its function is as follows. The UvrABC repair system catalyzes the recognition and processing of DNA lesions. UvrC both incises the 5' and 3' sides of the lesion. The N-terminal half is responsible for the 3' incision and the C-terminal half is responsible for the 5' incision. In Shewanella loihica (strain ATCC BAA-1088 / PV-4), this protein is UvrABC system protein C.